A 192-amino-acid chain; its full sequence is Pyridoxine/pyridoxamine 5'-phosphate oxidase (192 aa).

FMN is bound by residues R41–K46, F56–T57, R62, K63, and Q85. K46 is a binding site for substrate. Substrate-binding residues include Y103, R107, and S111. FMN contacts are provided by residues Q120–S121 and W165. Substrate is bound at residue R171–H173. R175 contributes to the FMN binding site.

The protein belongs to the pyridoxamine 5'-phosphate oxidase family. In terms of assembly, homodimer. It depends on FMN as a cofactor.

It carries out the reaction pyridoxamine 5'-phosphate + O2 + H2O = pyridoxal 5'-phosphate + H2O2 + NH4(+). The catalysed reaction is pyridoxine 5'-phosphate + O2 = pyridoxal 5'-phosphate + H2O2. It functions in the pathway cofactor metabolism; pyridoxal 5'-phosphate salvage; pyridoxal 5'-phosphate from pyridoxamine 5'-phosphate: step 1/1. Its pathway is cofactor metabolism; pyridoxal 5'-phosphate salvage; pyridoxal 5'-phosphate from pyridoxine 5'-phosphate: step 1/1. Functionally, catalyzes the oxidation of either pyridoxine 5'-phosphate (PNP) or pyridoxamine 5'-phosphate (PMP) into pyridoxal 5'-phosphate (PLP). This Zymomonas mobilis subsp. mobilis (strain ATCC 31821 / ZM4 / CP4) protein is Pyridoxine/pyridoxamine 5'-phosphate oxidase.